Here is a 236-residue protein sequence, read N- to C-terminus: Chloride intracellular channel protein 3 (236 aa).

Residues 1-88 (MAETKLQLFV…EDFLEETLGP (88 aa)) form a required for insertion into the membrane region. Residues 12–90 (ASEDGESVGH…FLEETLGPPD (79 aa)) enclose the GST N-terminal domain. A G-site motif is present at residues 22–25 (CPSC). Cys22 and Cys25 are joined by a disulfide. A helical transmembrane segment spans residues 24–44 (SCQRLFMVLLLKGVPFTLTTV). Phosphoserine is present on residues Ser49 and Ser159. The GST C-terminal domain occupies 68–235 (DSDAKTDTLQ…LAAYRPAVHP (168 aa)).

Belongs to the chloride channel CLIC family. Associated with the C-terminal of MAPK15. Detected in placenta (at protein level). Widely expressed. High expression is found in placenta followed by lung and heart. Low expression in skeletal muscle, kidney and pancreas.

It localises to the nucleus. The protein localises to the membrane. Its subcellular location is the cell membrane. It is found in the cytoplasm. The protein resides in the secreted. It localises to the extracellular space. The protein localises to the extracellular matrix. The enzyme catalyses chloride(in) = chloride(out). Its activity is regulated as follows. Inhibited by rapamycin, amphotericin B and IAA-94. In terms of biological role, in the soluble state, catalyzes glutaredoxin-like thiol disulfide exchange reactions with reduced glutathione as electron donor. Reduced in a glutathione-dependent way and secreted into the extracellular matrix where it activates TGM2 and promotes blood vessel growth during tissue remodeling as occurs in tumorigenesis. Can reduce specific cysteines in TGM2 and regulate cofactor binding. Can insert into membranes and form outwardly rectifying chloride ion channels. May participate in cellular growth control. The protein is Chloride intracellular channel protein 3 of Homo sapiens (Human).